The chain runs to 536 residues: Chaperonin GroEL (536 aa).

ATP-binding positions include 30–33, 86–90, G414, and D494; these read TLGP and DGTTT.

It belongs to the chaperonin (HSP60) family. In terms of assembly, forms a cylinder of 14 subunits composed of two heptameric rings stacked back-to-back. Interacts with the co-chaperonin GroES.

The protein localises to the cytoplasm. The catalysed reaction is ATP + H2O + a folded polypeptide = ADP + phosphate + an unfolded polypeptide.. Its function is as follows. Together with its co-chaperonin GroES, plays an essential role in assisting protein folding. The GroEL-GroES system forms a nano-cage that allows encapsulation of the non-native substrate proteins and provides a physical environment optimized to promote and accelerate protein folding. This is Chaperonin GroEL from Methanosarcina barkeri (strain Fusaro / DSM 804).